A 290-amino-acid chain; its full sequence is Eukaryotic translation initiation factor 3 subunit G (290 aa).

Residues 1-34 (MSRLGNRAADWADDEEFDDPSALPAQQVTTNKDG) form a disordered region. The RRM domain maps to 210-288 (ATLRVTNVSE…LILRVEFAKR (79 aa)).

This sequence belongs to the eIF-3 subunit G family. In terms of assembly, component of the eukaryotic translation initiation factor 3 (eIF-3) complex.

Its subcellular location is the cytoplasm. In terms of biological role, RNA-binding component of the eukaryotic translation initiation factor 3 (eIF-3) complex, which is involved in protein synthesis of a specialized repertoire of mRNAs and, together with other initiation factors, stimulates binding of mRNA and methionyl-tRNAi to the 40S ribosome. The eIF-3 complex specifically targets and initiates translation of a subset of mRNAs involved in cell proliferation. This subunit can bind 18S rRNA. This chain is Eukaryotic translation initiation factor 3 subunit G (tif35), found in Aspergillus fumigatus (strain CBS 144.89 / FGSC A1163 / CEA10) (Neosartorya fumigata).